We begin with the raw amino-acid sequence, 119 residues long: Autophagy-related protein 8h (119 aa).

Glycine 119 carries the Phosphatidylethanolamine amidated glycine lipid modification.

It belongs to the ATG8 family. Interacts with ATG4. Interacts with ATI1. Post-translationally, gly-119 forms then a thioester bond with the 'Cys-558' of ATG7 (E1-like activating enzyme) before being transferred to the 'Cys-258' of ATG3 (the specific E2 conjugating enzyme), in order to be finally amidated with phosphatidylethanolamine. This lipid modification anchors ATG8 to autophagosomes. Constitutively expressed.

It localises to the cytoplasmic vesicle. Its subcellular location is the autophagosome membrane. The protein resides in the vacuole membrane. The protein localises to the cytoplasm. It is found in the cytoskeleton. Functionally, ubiquitin-like modifier involved in autophagosomes formation. May mediate the delivery of the autophagosomes to the vacuole via the microtubule cytoskeleton. In Arabidopsis thaliana (Mouse-ear cress), this protein is Autophagy-related protein 8h (ATG8H).